The primary structure comprises 175 residues: Phosphatidylglycerol/phosphatidylinositol transfer protein (175 aa).

Residues 1 to 21 (MKFLSTAAALLVCLAPVSTTA) form the signal peptide. Residues 22-37 (RSLDFFKSSQSPIQAQ) constitute a propeptide that is removed on maturation.

It belongs to the NPC2 family. In terms of assembly, monomer.

Its subcellular location is the cytoplasm. It localises to the cytoplasmic vesicle. The protein localises to the golgi apparatus. Functionally, catalyzes the intermembrane transfer of phosphatidylglycerol and phosphatidylinositol. This chain is Phosphatidylglycerol/phosphatidylinositol transfer protein (pltp), found in Aspergillus oryzae (strain ATCC 42149 / RIB 40) (Yellow koji mold).